The sequence spans 164 residues: Ubiquitin-fold modifier-conjugating enzyme 1 (164 aa).

C116 functions as the Glycyl thioester intermediate in the catalytic mechanism.

Belongs to the ubiquitin-conjugating enzyme family. UFC1 subfamily.

In terms of biological role, E2-like enzyme which forms an intermediate with UFM1 via a thioester linkage. The polypeptide is Ubiquitin-fold modifier-conjugating enzyme 1 (Drosophila persimilis (Fruit fly)).